A 409-amino-acid chain; its full sequence is Aspartate aminotransferase, cytoplasmic (409 aa).

Serine 2 carries the N-acetylserine modification. 3 residues coordinate L-aspartate: glycine 38, tryptophan 138, and asparagine 191. Lysine 255 is subject to N6-(pyridoxal phosphate)lysine. An L-aspartate-binding site is contributed by arginine 383. Serine 385 is modified (phosphoserine).

Belongs to the class-I pyridoxal-phosphate-dependent aminotransferase family. As to quaternary structure, homodimer. It depends on pyridoxal 5'-phosphate as a cofactor.

The protein resides in the cytoplasm. The enzyme catalyses L-aspartate + 2-oxoglutarate = oxaloacetate + L-glutamate. Its function is as follows. Plays a key role in amino acid metabolism. This chain is Aspartate aminotransferase, cytoplasmic, found in Schizosaccharomyces pombe (strain 972 / ATCC 24843) (Fission yeast).